We begin with the raw amino-acid sequence, 97 residues long: MAATLPVFAVVFFAMVLASSQANECVSKGFGCLPQSDCPQEARLSYGGCSTVCCDLSKLTGCKGKGGECNPLDRQCKELQAESASCGKGQKCCVWLH.

An N-terminal signal peptide occupies residues 1 to 22 (MAATLPVFAVVFFAMVLASSQA).

Its subcellular location is the secreted. Functionally, potent competitive inhibitor of metallo-carboxypeptidases CPA1, CPA2, CPB, CPN, and TAF1a. Also inhibits human CPA4. Accelerates fibrinolysis in vitro and may contribute to the maintenance of host blood liquidity during feeding. The chain is Carboxypeptidase inhibitor from Rhipicephalus bursa (Tick).